The primary structure comprises 111 residues: uncharacterized protein (111 aa).

3 helical membrane passes run phenylalanine 4–isoleucine 22, leucine 49–isoleucine 71, and tyrosine 91–valine 108.

It localises to the cell membrane. This is an uncharacterized protein from Bacillus subtilis (strain 168).